The sequence spans 201 residues: 3-isopropylmalate dehydratase small subunit (201 aa).

This sequence belongs to the LeuD family. LeuD type 1 subfamily. In terms of assembly, heterodimer of LeuC and LeuD.

The catalysed reaction is (2R,3S)-3-isopropylmalate = (2S)-2-isopropylmalate. It functions in the pathway amino-acid biosynthesis; L-leucine biosynthesis; L-leucine from 3-methyl-2-oxobutanoate: step 2/4. Catalyzes the isomerization between 2-isopropylmalate and 3-isopropylmalate, via the formation of 2-isopropylmaleate. This Parvibaculum lavamentivorans (strain DS-1 / DSM 13023 / NCIMB 13966) protein is 3-isopropylmalate dehydratase small subunit.